A 303-amino-acid polypeptide reads, in one-letter code: Light-independent protochlorophyllide reductase iron-sulfur ATP-binding protein (303 aa).

Residues 1 to 24 form a disordered region; the sequence is MSSVLERPAAPAILPSRQDGEGSV. ATP is bound by residues 47–52 and Lys76; that span reads GIGKST. Ser51 is a Mg(2+) binding site. [4Fe-4S] cluster contacts are provided by Cys132 and Cys166. Residues 217–218 and 241–243 each bind ATP; these read NR and PDL.

The protein belongs to the NifH/BchL/ChlL family. Homodimer. Protochlorophyllide reductase is composed of three subunits; BchL, BchN and BchB. [4Fe-4S] cluster is required as a cofactor.

It catalyses the reaction chlorophyllide a + oxidized 2[4Fe-4S]-[ferredoxin] + 2 ADP + 2 phosphate = protochlorophyllide a + reduced 2[4Fe-4S]-[ferredoxin] + 2 ATP + 2 H2O. It participates in porphyrin-containing compound metabolism; bacteriochlorophyll biosynthesis (light-independent). In terms of biological role, component of the dark-operative protochlorophyllide reductase (DPOR) that uses Mg-ATP and reduced ferredoxin to reduce ring D of protochlorophyllide (Pchlide) to form chlorophyllide a (Chlide). This reaction is light-independent. The L component serves as a unique electron donor to the NB-component of the complex, and binds Mg-ATP. The chain is Light-independent protochlorophyllide reductase iron-sulfur ATP-binding protein from Rhodospirillum centenum (strain ATCC 51521 / SW).